A 64-amino-acid polypeptide reads, in one-letter code: Alpha-like toxin BmK M2 (64 aa).

The LCN-type CS-alpha/beta domain maps to 2-64 (RDAYIAKPHN…VPIRVPGKCH (63 aa)). Cystine bridges form between cysteine 12/cysteine 63, cysteine 16/cysteine 36, cysteine 22/cysteine 46, and cysteine 26/cysteine 48.

This sequence belongs to the long (4 C-C) scorpion toxin superfamily. Sodium channel inhibitor family. Alpha subfamily. Expressed by the venom gland.

The protein localises to the secreted. Functionally, alpha toxins bind voltage-independently at site-3 of sodium channels (Nav) and inhibit the inactivation of the activated channels, thereby blocking neuronal transmission. This toxin is active against both mammals and insects, and is classified as an alpha-like toxin. The sequence is that of Alpha-like toxin BmK M2 from Olivierus martensii (Manchurian scorpion).